Here is a 650-residue protein sequence, read N- to C-terminus: Aminopeptidase B (650 aa).

Substrate is bound at residue 298–302 (GGMEN). A Zn(2+)-binding site is contributed by His-325. Catalysis depends on Glu-326, which acts as the Proton acceptor. His-329 and Glu-348 together coordinate Zn(2+). Lys-446 carries the N6-acetyllysine modification.

The protein belongs to the peptidase M1 family. As to quaternary structure, monomer. Requires Zn(2+) as cofactor.

The protein resides in the secreted. The enzyme catalyses Release of N-terminal Arg and Lys from oligopeptides when P1' is not Pro. Also acts on arylamides of Arg and Lys.. Exopeptidase which selectively removes arginine and/or lysine residues from the N-terminus of several peptide substrates including Arg(0)-Leu-enkephalin, Arg(0)-Met-enkephalin and Arg(-1)-Lys(0)-somatostatin-14. Can hydrolyze leukotriene A4 (LTA-4) into leukotriene B4 (LTB-4). In Mus musculus (Mouse), this protein is Aminopeptidase B (Rnpep).